The chain runs to 335 residues: Mesoderm-specific transcript homolog protein (335 aa).

Transmembrane regions (helical) follow at residues 13–33 (WWVQ…HIPP) and 63–83 (VGVV…TSSY). The AB hydrolase-1 domain occupies 71 to 310 (IVVLLHGFPT…PRSTVSILDD (240 aa)). Residues 98–103 (RVIALD) carry the RVIALD motif. A glycan (N-linked (GlcNAc...) asparagine) is linked at N163. A helical transmembrane segment spans residues 266-286 (VGALASVTIPIHFIYGPLDPV).

Belongs to the AB hydrolase superfamily. Highly expressed in hydatidiform moles, but barely expressed in dermoid cysts. Biallelic expression is detected in blood lymphocytes. Seems to imprinted in an isoform-specific manner rather than in a tissue-specific manner in lymphocytes. Isoform 1 is expressed only from the paternal allele. Isoform 2 is expressed from both the paternal allele and the maternal allele.

The protein resides in the endoplasmic reticulum membrane. The protein is Mesoderm-specific transcript homolog protein (MEST) of Homo sapiens (Human).